The following is a 370-amino-acid chain: Holliday junction branch migration complex subunit RuvB (370 aa).

Positions Met-1–Tyr-182 are large ATPase domain (RuvB-L). ATP is bound by residues Leu-21, Arg-22, Gly-63, Lys-66, Thr-67, Thr-68, Glu-129–Phe-131, Arg-172, Tyr-182, and Arg-219. Thr-67 provides a ligand contact to Mg(2+). The interval Arg-183 to Glu-253 is small ATPAse domain (RuvB-S). Residues Pro-256–Glu-370 form a head domain (RuvB-H) region. Positions 311 and 316 each coordinate DNA.

It belongs to the RuvB family. In terms of assembly, homohexamer. Forms an RuvA(8)-RuvB(12)-Holliday junction (HJ) complex. HJ DNA is sandwiched between 2 RuvA tetramers; dsDNA enters through RuvA and exits via RuvB. An RuvB hexamer assembles on each DNA strand where it exits the tetramer. Each RuvB hexamer is contacted by two RuvA subunits (via domain III) on 2 adjacent RuvB subunits; this complex drives branch migration. In the full resolvosome a probable DNA-RuvA(4)-RuvB(12)-RuvC(2) complex forms which resolves the HJ.

Its subcellular location is the cytoplasm. The enzyme catalyses ATP + H2O = ADP + phosphate + H(+). Its function is as follows. The RuvA-RuvB-RuvC complex processes Holliday junction (HJ) DNA during genetic recombination and DNA repair, while the RuvA-RuvB complex plays an important role in the rescue of blocked DNA replication forks via replication fork reversal (RFR). RuvA specifically binds to HJ cruciform DNA, conferring on it an open structure. The RuvB hexamer acts as an ATP-dependent pump, pulling dsDNA into and through the RuvAB complex. RuvB forms 2 homohexamers on either side of HJ DNA bound by 1 or 2 RuvA tetramers; 4 subunits per hexamer contact DNA at a time. Coordinated motions by a converter formed by DNA-disengaged RuvB subunits stimulates ATP hydrolysis and nucleotide exchange. Immobilization of the converter enables RuvB to convert the ATP-contained energy into a lever motion, pulling 2 nucleotides of DNA out of the RuvA tetramer per ATP hydrolyzed, thus driving DNA branch migration. The RuvB motors rotate together with the DNA substrate, which together with the progressing nucleotide cycle form the mechanistic basis for DNA recombination by continuous HJ branch migration. Branch migration allows RuvC to scan DNA until it finds its consensus sequence, where it cleaves and resolves cruciform DNA. This chain is Holliday junction branch migration complex subunit RuvB, found in Heliobacterium modesticaldum (strain ATCC 51547 / Ice1).